We begin with the raw amino-acid sequence, 114 residues long: Putative small ubiquitin-related modifier 4 (114 aa).

Residues 1 to 20 are disordered; the sequence is MSTTSRVGSNEVKMEGQKRK. In terms of domain architecture, Ubiquitin-like spans 26–104; it reads THVTLKVKGQ…IDAMLCQQSG (79 aa). Residue Gly-104 forms a Glycyl lysine isopeptide (Gly-Lys) (interchain with K-? in acceptor proteins) linkage.

This sequence belongs to the ubiquitin family. SUMO subfamily. In terms of assembly, interacts with SAE2, SCE1, SIZ1 and MMS21 Covalently attached to a number of proteins.

The protein localises to the nucleus. Its subcellular location is the cytoplasm. Functionally, ubiquitin-like protein which can be covalently attached to target lysines as a monomer. Does not seem to be involved in protein degradation and may function as an antagonist of ubiquitin in the degradation process. This Arabidopsis thaliana (Mouse-ear cress) protein is Putative small ubiquitin-related modifier 4 (SUMO4).